Consider the following 1454-residue polypeptide: E3 ubiquitin-protein ligase substrate receptor MMS22 (1454 aa).

Residues 159–178 (NSSVQSQRYDSDEEIPKKRH) are disordered. The segment at 1201–1454 (YDEGDISRNF…SEPFKTFKNT (254 aa)) is required for interaction with MMS1.

The protein belongs to the MMS22 family. In terms of assembly, component of a cullin-RING ligase (CRL) composed of 4 subunits: the RING protein HRT1, the cullin RTT101, a linker protein MMS1, and the substrate receptor MMS22. This complex further interacts with RTT107 and CTF4 to form RTT101-MMS1-MMS22-RTT107 and RTT101-MMS1-MMS22-CTF4 complexes respectively. Interacts (via C-ter) with MMS1 (via N-ter). Interacts with RTT107.

It localises to the nucleus. Its function is as follows. Substrate targeting component of a cullin-RING-based E3 ubiquitin-protein ligase complex RTT101(MMS1-MMS22). RTT101(MMS1-MMS22) promotes fork progression through damaged DNA or natural pause sites by stabilizing replication proteins like the replication fork-pausing complex (FPC) and leading-strand polymerase at stalled replication forks. RTT101(MMS1-MMS22) ubiquitinates the acetylated histones H3K56ac-H4 at lysine residues H3K121, H3K122 and H3K125. Ubiquitination is required for efficient histone deposition during replication-coupled nucleosome assembly, probably by facilitating the transfer of H3-H4 from ASF1 to other chaperones involved in histone deposition. The chain is E3 ubiquitin-protein ligase substrate receptor MMS22 (MMS22) from Saccharomyces cerevisiae (strain ATCC 204508 / S288c) (Baker's yeast).